The primary structure comprises 352 residues: C-C chemokine receptor type 5 (352 aa).

Residues 1–30 (MDYQVSSPIYDIDYYTSEPCQKINVKQIAA) are Extracellular-facing. Tyr-3 is subject to Sulfotyrosine. O-linked (GalNAc...) serine glycans are attached at residues Ser-6 and Ser-7. 3 positions are modified to sulfotyrosine: Tyr-10, Tyr-14, and Tyr-15. 2 disulfide bridges follow: Cys-20/Cys-269 and Cys-101/Cys-178. A helical transmembrane segment spans residues 31-58 (RLLPPLYSLVFIFGFVGNMLVILILINC). At 59–68 (KRLKSMTDIY) the chain is on the cytoplasmic side. The helical transmembrane segment at 69-89 (LLNLAISDLFFLLTVPFWAHY) threads the bilayer. Residues 90–102 (AAAQWDFGNTMCQ) lie on the Extracellular side of the membrane. The helical transmembrane segment at 103–124 (LLTGLYFIGFFSGIFFIILLTI) threads the bilayer. Topologically, residues 125 to 141 (DRYLAIVHAVFALKART) are cytoplasmic. A helical membrane pass occupies residues 142–166 (VTFGVVTSVITWVVAVFASLPGIIF). Topologically, residues 167-198 (TRSQKEGLHYTCSSHFPYSQYQFWKNFQTLKI) are extracellular. The chain crosses the membrane as a helical span at residues 199 to 218 (VILGLVLPLLVMVICYSGIL). Residues 219–235 (KTLLRCRNEKKRHRAVR) lie on the Cytoplasmic side of the membrane. A helical membrane pass occupies residues 236–260 (LIFTIMIVYFLFWAPYNIVLLLNTF). Topologically, residues 261-277 (QEFFGLNNCSSSNRLDQ) are extracellular. A helical transmembrane segment spans residues 278-301 (AMQVTETLGMTHCCINPIIYAFVG). Topologically, residues 302–352 (EKFRNYLLVFFQKHIAKRFCKCCSIFQQEAPERASSVYTRSTGEQEISVGL) are cytoplasmic. Residues Cys-321, Cys-323, and Cys-324 are each lipidated (S-palmitoyl cysteine). Residues Ser-336, Ser-337, Ser-342, and Ser-349 each carry the phosphoserine; by BARK1 modification.

Belongs to the G-protein coupled receptor 1 family. As to quaternary structure, interacts with PRAF2. Efficient ligand binding to CCL3/MIP-1alpha and CCL4/MIP-1beta requires sulfation, O-glycosylation and sialic acid modifications. Glycosylation on Ser-6 is required for efficient binding of CCL4. Interacts with GRK2. Interacts with ARRB1 and ARRB2. Interacts with CNIH4. Interacts with S100A4; this interaction stimulates T-lymphocyte chemotaxis. In terms of processing, sulfated on at least 2 of the N-terminal tyrosines. Sulfation is required for efficient binding of the chemokines, CCL3 and CCL4. Palmitoylation in the C-terminal is important for cell surface expression. Post-translationally, phosphorylation on serine residues in the C-terminal is stimulated by binding CC chemokines especially by APO-RANTES. In terms of processing, O-glycosylated, but not N-glycosylated. Ser-6 appears to be the major site even if Ser-7 may be also O-glycosylated. Also sialylated glycans present which contribute to chemokine binding. Thr-16 and Ser-17 may also be glycosylated and, if so, with small moieties such as a T-antigen.

It is found in the cell membrane. Receptor for a number of inflammatory CC-chemokines including CCL3/MIP-1-alpha, CCL4/MIP-1-beta and RANTES and subsequently transduces a signal by increasing the intracellular calcium ion level. May play a role in the control of granulocytic lineage proliferation or differentiation. Participates in T-lymphocyte migration to the infection site by acting as a chemotactic receptor. This is C-C chemokine receptor type 5 (CCR5) from Pan paniscus (Pygmy chimpanzee).